Reading from the N-terminus, the 199-residue chain is Charged multivesicular body protein 1b (199 aa).

2 coiled-coil regions span residues 15 to 42 (AKELHRNAKKCEKEEKTEKAKIKKAIQK) and 178 to 199 (TSVASTEQDELSQRLARLRDQV). Residues 167-199 (ELPQGQTGSVGTSVASTEQDELSQRLARLRDQV) form a disordered region. Polar residues predominate over residues 170–183 (QGQTGSVGTSVAST). The MIT-interacting motif motif lies at 186–196 (DELSQRLARLR).

Belongs to the SNF7 family.

The protein localises to the cytoplasm. The protein resides in the cytosol. Its subcellular location is the endosome. It localises to the late endosome membrane. Its function is as follows. Probable peripherally associated component of the endosomal sorting required for transport complex III (ESCRT-III) which is involved in multivesicular bodies (MVBs) formation and sorting of endosomal cargo proteins into MVBs. MVBs contain intraluminal vesicles (ILVs) that are generated by invagination and scission from the limiting membrane of the endosome and mostly are delivered to lysosomes enabling degradation of membrane proteins, such as stimulated growth factor receptors, lysosomal enzymes and lipids. The sequence is that of Charged multivesicular body protein 1b (chmp1b) from Xenopus tropicalis (Western clawed frog).